A 74-amino-acid chain; its full sequence is MGQRLSCGCFRTDQLVTHSGEVVSLNADTFEEFSMEEFDIPPPPPLPKPVFKQPGPYKIPARSQRCPSKRRDPY.

A lipid anchor (N-myristoyl glycine; by host) is attached at G2. Positions 15 to 16 match the Di-leucine-like internalization motif motif; that stretch reads LV. The tract at residues 34 to 40 is asp/Glu-rich (acidic); that stretch reads SMEEFDI. Residues 36-74 form a disordered region; it reads EEFDIPPPPPLPKPVFKQPGPYKIPARSQRCPSKRRDPY.

It belongs to the herpesviridae cytoplasmic envelopment protein 3 family. Interacts with cytoplasmic envelopment protein 2; this interaction is essential for the proper localization of each protein to the assembly complex and thus for the production of infectious virus. In terms of processing, myristoylation and palmitoylation (probably on one or more of the nearby cysteines at the N-terminus) enable membrane-binding and Golgi apparatus-specific targeting and are essential for efficient packaging. Phosphorylated. Phosphorylation does not seem to be required for recycling to the host Golgi apparatus. Packaging is selective for underphosphorylated forms.

It localises to the virion tegument. The protein resides in the virion membrane. Its subcellular location is the host cell membrane. It is found in the host Golgi apparatus membrane. Its function is as follows. Plays an important role in the cytoplasmic envelopment of tegument proteins and capsids during the assembly and egress processes. Also participates in viral entry at the fusion step probably by regulating the core fusion machinery. This is Cytoplasmic envelopment protein 3 from Equine herpesvirus 1 (strain Ab4p) (EHV-1).